The sequence spans 227 residues: MICOS complex subunit MIC19 (227 aa).

G2 carries N-myristoyl glycine lipidation. Residue S29 is modified to Phosphoserine. Disordered stretches follow at residues 34–61 (DRMK…SDEE) and 73–92 (EQAK…KELD). Polar residues predominate over residues 39-49 (SSPSGSKSQRY). Position 49 is a phosphotyrosine (Y49). Phosphoserine is present on residues S50, S56, and S58. K142 is subject to N6-acetyllysine. One can recognise a CHCH domain in the interval 180–222 (HPVCADLQAKILQCYRENTHQTLKCSALATQYMHCVNHAKQSM). Short sequence motifs (cx9C motif) lie at residues 183–193 (CADLQAKILQC) and 204–214 (CSALATQYMHC). 2 disulfide bridges follow: C183/C214 and C193/C204.

It belongs to the MICOS complex subunit Mic19 family. Metazoan Mic19 subfamily. In terms of assembly, component of the mitochondrial contact site and cristae organizing system (MICOS) complex, composed of at least MICOS10/MIC10, CHCHD3/MIC19, CHCHD6/MIC25, APOOL/MIC27, IMMT/MIC60, APOO/MIC23/MIC26 and MICOS13/MIC13. This complex was also known under the names MINOS or MitOS complex. The MICOS complex associates with mitochondrial outer membrane proteins SAMM50, MTX1 and MTX2 (together described as components of the mitochondrial outer membrane sorting assembly machinery (SAM) complex) and DNAJC11, mitochondrial inner membrane protein TMEM11 and with HSPA9. The MICOS and SAM complexes together with DNAJC11 are part of a large protein complex spanning both membranes termed the mitochondrial intermembrane space bridging (MIB) complex. Interacts with HSPA1A/HSPA1B and OPA1, preferentially with the soluble OPA1 form. Interacts with IMMT/MIC60. (Microbial infection) Interacts with human cytomegalovirus protein UL13; this interaction alters cristae architecture. As to expression, detected at low levels in brain, placenta, lung, liver, kidney and pancreas with increased levels in heart and skeletal muscle. Higher expression in primary lung cancers than in normal lung tissue.

It localises to the mitochondrion inner membrane. The protein resides in the cytoplasm. The protein localises to the nucleus. It is found in the mitochondrion. Component of the MICOS complex, a large protein complex of the mitochondrial inner membrane that plays crucial roles in the maintenance of crista junctions, inner membrane architecture, and formation of contact sites to the outer membrane. Plays an important role in the maintenance of the MICOS complex stability and the mitochondrial cristae morphology. Has also been shown to function as a transcription factor which binds to the BAG1 promoter and represses BAG1 transcription. This Homo sapiens (Human) protein is MICOS complex subunit MIC19 (CHCHD3).